The primary structure comprises 83 residues: RNA-binding protein Hfq (83 aa).

A Sm domain is found at aspartate 10–isoleucine 70.

This sequence belongs to the Hfq family. In terms of assembly, homohexamer.

Functionally, RNA chaperone that binds small regulatory RNA (sRNAs) and mRNAs to facilitate mRNA translational regulation in response to envelope stress, environmental stress and changes in metabolite concentrations. Also binds with high specificity to tRNAs. In Desulfitobacterium hafniense (strain Y51), this protein is RNA-binding protein Hfq.